A 318-amino-acid chain; its full sequence is Ribosomal RNA small subunit methyltransferase H (318 aa).

S-adenosyl-L-methionine-binding positions include 34 to 36 (GGH), Asp-57, Leu-91, Asp-110, and Gln-117.

It belongs to the methyltransferase superfamily. RsmH family.

The protein resides in the cytoplasm. The catalysed reaction is cytidine(1402) in 16S rRNA + S-adenosyl-L-methionine = N(4)-methylcytidine(1402) in 16S rRNA + S-adenosyl-L-homocysteine + H(+). Functionally, specifically methylates the N4 position of cytidine in position 1402 (C1402) of 16S rRNA. In Chlorobaculum parvum (strain DSM 263 / NCIMB 8327) (Chlorobium vibrioforme subsp. thiosulfatophilum), this protein is Ribosomal RNA small subunit methyltransferase H.